Here is a 720-residue protein sequence, read N- to C-terminus: Putative glutamine--fructose-6-phosphate aminotransferase [isomerizing] (720 aa).

Cys-2 serves as the catalytic Nucleophile; for GATase activity. Positions 2–321 constitute a Glutamine amidotransferase type-2 domain; the sequence is CGIFGYCNFL…DNDTAHIYDG (320 aa). Residues 266–280 are compositionally biased toward polar residues; that stretch reads STTSTFNHGSSTETP. Residues 266 to 285 are disordered; that stretch reads STTSTFNHGSSTETPAENGL. 2 consecutive SIS domains span residues 393–532 and 565–710; these read WLTE…DLVS and CDKK…VDLP.

The catalysed reaction is D-fructose 6-phosphate + L-glutamine = D-glucosamine 6-phosphate + L-glutamate. The protein operates within nucleotide-sugar biosynthesis; UDP-N-acetyl-alpha-D-glucosamine biosynthesis; alpha-D-glucosamine 6-phosphate from D-fructose 6-phosphate: step 1/1. Involved in amino sugar synthesis (formation of chitin, supplies the amino sugars of asparagine-linked oligosaccharides of glycoproteins). This Saccharomyces cerevisiae (strain JAY291) (Baker's yeast) protein is Putative glutamine--fructose-6-phosphate aminotransferase [isomerizing].